Consider the following 119-residue polypeptide: Large ribosomal subunit protein uL24 (119 aa).

It belongs to the universal ribosomal protein uL24 family. Part of the 50S ribosomal subunit.

One of two assembly initiator proteins, it binds directly to the 5'-end of the 23S rRNA, where it nucleates assembly of the 50S subunit. In terms of biological role, one of the proteins that surrounds the polypeptide exit tunnel on the outside of the subunit. The chain is Large ribosomal subunit protein uL24 from Leptospira interrogans serogroup Icterohaemorrhagiae serovar copenhageni (strain Fiocruz L1-130).